The sequence spans 295 residues: RNA polymerase sigma factor RpoH (295 aa).

Residues Met52 to Ser121 form a sigma-70 factor domain-2 region. The Interaction with polymerase core subunit RpoC signature appears at Glu76–Ser79. The sigma-70 factor domain-4 stretch occupies residues Ala230–Lys281. Residues Leu254 to Val273 constitute a DNA-binding region (H-T-H motif).

The protein belongs to the sigma-70 factor family. RpoH subfamily. In terms of assembly, interacts with the RNA polymerase core enzyme.

The protein localises to the cytoplasm. Functionally, sigma factors are initiation factors that promote the attachment of RNA polymerase to specific initiation sites and are then released. This sigma factor is involved in regulation of expression of heat shock genes. The sequence is that of RNA polymerase sigma factor RpoH from Caulobacter vibrioides (strain ATCC 19089 / CIP 103742 / CB 15) (Caulobacter crescentus).